The chain runs to 427 residues: 3-phosphoshikimate 1-carboxyvinyltransferase (427 aa).

Residues K22, S23, and R27 each contribute to the 3-phosphoshikimate site. K22 is a phosphoenolpyruvate binding site. Phosphoenolpyruvate contacts are provided by G96 and R124. 7 residues coordinate 3-phosphoshikimate: S169, S170, Q171, S197, D313, N336, and K340. A phosphoenolpyruvate-binding site is contributed by Q171. The Proton acceptor role is filled by D313. 3 residues coordinate phosphoenolpyruvate: R344, R386, and K411.

It belongs to the EPSP synthase family. As to quaternary structure, monomer.

It localises to the cytoplasm. The catalysed reaction is 3-phosphoshikimate + phosphoenolpyruvate = 5-O-(1-carboxyvinyl)-3-phosphoshikimate + phosphate. It participates in metabolic intermediate biosynthesis; chorismate biosynthesis; chorismate from D-erythrose 4-phosphate and phosphoenolpyruvate: step 6/7. Its function is as follows. Catalyzes the transfer of the enolpyruvyl moiety of phosphoenolpyruvate (PEP) to the 5-hydroxyl of shikimate-3-phosphate (S3P) to produce enolpyruvyl shikimate-3-phosphate and inorganic phosphate. This Salmonella choleraesuis (strain SC-B67) protein is 3-phosphoshikimate 1-carboxyvinyltransferase.